We begin with the raw amino-acid sequence, 46 residues long: Endochitinase 2 (46 aa).

It belongs to the glycosyl hydrolase 19 family. Chitinase class I subfamily.

The enzyme catalyses Random endo-hydrolysis of N-acetyl-beta-D-glucosaminide (1-&gt;4)-beta-linkages in chitin and chitodextrins.. In terms of biological role, defense against chitin-containing fungal and bacterial pathogens. The polypeptide is Endochitinase 2 (Arachis hypogaea (Peanut)).